The chain runs to 259 residues: Dihydroorotate dehydrogenase B (NAD(+)), electron transfer subunit (259 aa).

Residues 2 to 102 form the FAD-binding FR-type domain; the sequence is MQKQNMIVVN…LGPLGHGFPV (101 aa). Residues 53–56, 70–72, and 77–78 contribute to the FAD site; these read RPIS, LYR, and GT. [2Fe-2S] cluster is bound by residues Cys221, Cys226, Cys229, and Cys246.

This sequence belongs to the PyrK family. As to quaternary structure, heterotetramer of 2 PyrK and 2 PyrD type B subunits. [2Fe-2S] cluster is required as a cofactor. It depends on FAD as a cofactor.

Its pathway is pyrimidine metabolism; UMP biosynthesis via de novo pathway; orotate from (S)-dihydroorotate (NAD(+) route): step 1/1. Responsible for channeling the electrons from the oxidation of dihydroorotate from the FMN redox center in the PyrD type B subunit to the ultimate electron acceptor NAD(+). The protein is Dihydroorotate dehydrogenase B (NAD(+)), electron transfer subunit of Bacillus cereus (strain Q1).